A 212-amino-acid chain; its full sequence is Thymidylate kinase (212 aa).

10 to 17 (GLEGAGKT) is an ATP binding site.

The protein belongs to the thymidylate kinase family.

It catalyses the reaction dTMP + ATP = dTDP + ADP. Its function is as follows. Phosphorylation of dTMP to form dTDP in both de novo and salvage pathways of dTTP synthesis. The sequence is that of Thymidylate kinase from Baumannia cicadellinicola subsp. Homalodisca coagulata.